The sequence spans 431 residues: Serine/threonine-protein kinase PknA (431 aa).

Residues methionine 1 to alanine 339 are Cytoplasmic-facing. In terms of domain architecture, Protein kinase spans tyrosine 13–alanine 272. ATP-binding positions include isoleucine 19–valine 27 and lysine 42. The active-site Proton acceptor is the aspartate 141. The segment at alanine 276–phenylalanine 333 is disordered. Residues arginine 282–arginine 291 are compositionally biased toward pro residues. Positions alanine 292 to alanine 314 are enriched in low complexity. A helical transmembrane segment spans residues leucine 340–isoleucine 360. Topologically, residues lysine 361–glutamine 431 are extracellular. A disordered region spans residues asparagine 366–proline 418. A compositionally biased stretch (low complexity) spans proline 368–alanine 384.

Belongs to the protein kinase superfamily. Ser/Thr protein kinase family. In terms of processing, autophosphorylated.

The protein localises to the cell membrane. The enzyme catalyses L-seryl-[protein] + ATP = O-phospho-L-seryl-[protein] + ADP + H(+). It catalyses the reaction L-threonyl-[protein] + ATP = O-phospho-L-threonyl-[protein] + ADP + H(+). Functionally, protein kinase that regulates many aspects of mycobacterial physiology. Is a key component of a signal transduction pathway that regulates cell growth, cell shape and cell division via phosphorylation of target proteins. The chain is Serine/threonine-protein kinase PknA (pknA) from Mycobacterium bovis (strain ATCC BAA-935 / AF2122/97).